A 151-amino-acid chain; its full sequence is Deoxyuridine 5'-triphosphate nucleotidohydrolase (151 aa).

Substrate contacts are provided by residues Arg70–Gly72, Asn83, Leu87–Asp89, and Met97.

The protein belongs to the dUTPase family. Mg(2+) serves as cofactor.

It carries out the reaction dUTP + H2O = dUMP + diphosphate + H(+). It participates in pyrimidine metabolism; dUMP biosynthesis; dUMP from dCTP (dUTP route): step 2/2. This enzyme is involved in nucleotide metabolism: it produces dUMP, the immediate precursor of thymidine nucleotides and it decreases the intracellular concentration of dUTP so that uracil cannot be incorporated into DNA. The chain is Deoxyuridine 5'-triphosphate nucleotidohydrolase from Pseudomonas aeruginosa (strain LESB58).